The chain runs to 270 residues: Fructose-2,6-bisphosphatase TIGAR (270 aa).

Histidine 11 serves as the catalytic Tele-phosphohistidine intermediate. Residue lysine 50 is modified to N6-acetyllysine. The Proton donor/acceptor role is filled by glutamate 89.

It belongs to the phosphoglycerate mutase family. In terms of assembly, interacts with HK2; the interaction increases hexokinase HK2 activity in a hypoxia- and HIF1A-dependent manner, resulting in the regulation of mitochondrial membrane potential, thus increasing NADPH production and decreasing intracellular ROS levels.

It localises to the cytoplasm. Its subcellular location is the nucleus. The protein resides in the mitochondrion. It catalyses the reaction beta-D-fructose 2,6-bisphosphate + H2O = beta-D-fructose 6-phosphate + phosphate. Functionally, fructose-bisphosphatase hydrolyzing fructose-2,6-bisphosphate as well as fructose-1,6-bisphosphate. Acts as a negative regulator of glycolysis by lowering intracellular levels of fructose-2,6-bisphosphate in a p53/TP53-dependent manner, resulting in the pentose phosphate pathway (PPP) activation and NADPH production. Contributes to the generation of reduced glutathione to cause a decrease in intracellular reactive oxygen species (ROS) content, correlating with its ability to protect cells from oxidative or metabolic stress-induced cell death. Plays a role in promoting protection against cell death during hypoxia by decreasing mitochondria ROS levels in a HK2-dependent manner through a mechanism that is independent of its fructose-bisphosphatase activity. In response to cardiac damage stress, mediates p53-induced inhibition of myocyte mitophagy through ROS levels reduction and the subsequent inactivation of BNIP3. Reduced mitophagy results in an enhanced apoptotic myocyte cell death, and exacerbates cardiac damage. Plays a role in adult intestinal regeneration; contributes to the growth, proliferation and survival of intestinal crypts following tissue ablation. Plays a neuroprotective role against ischemic brain damage by enhancing PPP flux and preserving mitochondria functions. Protects glioma cells from hypoxia- and ROS-induced cell death by inhibiting glycolysis and activating mitochondrial energy metabolism and oxygen consumption in a TKTL1-dependent and p53/TP53-independent manner. Plays a role in cancer cell survival by promoting DNA repair through activating PPP flux in a CDK5-ATM-dependent signaling pathway during hypoxia and/or genome stress-induced DNA damage responses. Involved in intestinal tumor progression. In Bos taurus (Bovine), this protein is Fructose-2,6-bisphosphatase TIGAR.